Here is a 209-residue protein sequence, read N- to C-terminus: COP9 signalosome complex subunit 8 (209 aa).

Residues 8–179 (DNAFSFRKLL…GALDVSLNRF (172 aa)) form the PCI domain. Serine 175 is subject to Phosphoserine.

It belongs to the CSN8 family. As to quaternary structure, component of the CSN complex, composed of COPS1/GPS1, COPS2, COPS3, COPS4, COPS5, COPS6, COPS7 (COPS7A or COPS7B), COPS8 and COPS9. In the complex, it probably interacts directly with COPS3, COPS4 and COPS7 (COPS7A or COPS7B).

Its subcellular location is the cytoplasm. The protein localises to the nucleus. Its function is as follows. Component of the COP9 signalosome complex (CSN), a complex involved in various cellular and developmental processes. The CSN complex is an essential regulator of the ubiquitin (Ubl) conjugation pathway by mediating the deneddylation of the cullin subunits of SCF-type E3 ligase complexes, leading to decrease the Ubl ligase activity of SCF-type complexes such as SCF, CSA or DDB2. The complex is also involved in phosphorylation of p53/TP53, c-jun/JUN, IkappaBalpha/NFKBIA, ITPK1 and IRF8/ICSBP, possibly via its association with CK2 and PKD kinases. CSN-dependent phosphorylation of TP53 and JUN promotes and protects degradation by the Ubl system, respectively. The polypeptide is COP9 signalosome complex subunit 8 (Cops8) (Rattus norvegicus (Rat)).